The sequence spans 290 residues: RIO-type serine/threonine-protein kinase Rio1 (290 aa).

One can recognise a Protein kinase domain in the interval 76 to 290 (TEYIGIVNSG…PIDEAMIKQL (215 aa)). ATP-binding positions include 82-90 (VNSGKEAVV) and Lys103. Asp214 functions as the Proton acceptor in the catalytic mechanism. Asn219 and Asp231 together coordinate Mg(2+). Catalysis depends on Asp231, which acts as the 4-aspartylphosphate intermediate.

Belongs to the protein kinase superfamily. RIO-type Ser/Thr kinase family.

It carries out the reaction L-seryl-[protein] + ATP = O-phospho-L-seryl-[protein] + ADP + H(+). It catalyses the reaction L-threonyl-[protein] + ATP = O-phospho-L-threonyl-[protein] + ADP + H(+). The enzyme catalyses ATP + H2O = ADP + phosphate + H(+). Its function is as follows. Despite the protein kinase domain is proposed to act predominantly as an ATPase. The chain is RIO-type serine/threonine-protein kinase Rio1 (rio1) from Methanocaldococcus jannaschii (strain ATCC 43067 / DSM 2661 / JAL-1 / JCM 10045 / NBRC 100440) (Methanococcus jannaschii).